The following is a 1392-amino-acid chain: DNA-directed RNA polymerase subunit beta'' (1392 aa).

4 residues coordinate Zn(2+): Cys224, Cys295, Cys302, and Cys305.

This sequence belongs to the RNA polymerase beta' chain family. RpoC2 subfamily. In plastids the minimal PEP RNA polymerase catalytic core is composed of four subunits: alpha, beta, beta', and beta''. When a (nuclear-encoded) sigma factor is associated with the core the holoenzyme is formed, which can initiate transcription. The cofactor is Zn(2+).

It localises to the plastid. It is found in the chloroplast. The enzyme catalyses RNA(n) + a ribonucleoside 5'-triphosphate = RNA(n+1) + diphosphate. Functionally, DNA-dependent RNA polymerase catalyzes the transcription of DNA into RNA using the four ribonucleoside triphosphates as substrates. This chain is DNA-directed RNA polymerase subunit beta'', found in Eucalyptus globulus subsp. globulus (Tasmanian blue gum).